The following is a 195-amino-acid chain: Peptidyl-tRNA hydrolase (195 aa).

Tyr17 is a binding site for tRNA. His22 acts as the Proton acceptor in catalysis. TRNA is bound by residues Tyr68, Asn70, and Asn116.

It belongs to the PTH family. In terms of assembly, monomer.

Its subcellular location is the cytoplasm. It catalyses the reaction an N-acyl-L-alpha-aminoacyl-tRNA + H2O = an N-acyl-L-amino acid + a tRNA + H(+). Hydrolyzes ribosome-free peptidyl-tRNAs (with 1 or more amino acids incorporated), which drop off the ribosome during protein synthesis, or as a result of ribosome stalling. In terms of biological role, catalyzes the release of premature peptidyl moieties from peptidyl-tRNA molecules trapped in stalled 50S ribosomal subunits, and thus maintains levels of free tRNAs and 50S ribosomes. The chain is Peptidyl-tRNA hydrolase from Shewanella sp. (strain ANA-3).